A 1357-amino-acid chain; its full sequence is MAYSYTEKKRIRKNFGKLPQVMDAPYLLSIQVDSYRTFLQDGKSPKNREDIGLQAAFRSVFPIESYSGNAALEFVEYSLGKPEFDVRECILRGSTYAAPMRVKIRLIIKDRETKSIKDVREQEVYMGEIPLMTENGTFVINGTERVIVSQLHRSPGVFFDHDKGKTHSSGKVLYSARIIPYRGSWLDFEFDAKDLVYVRIDRRRKLLATVVLRALGYNNEQILNLFYEKVPVYLDMGSYQIDLVPERLRGEMAQFDITDNEGKVIVEQGKRINARHVRQMEAAGLTKLSVPDEYLYERITAEDITLRDGEVIAANTLLSHEVMVKLAEGGVKQFNILFTNDIDRGSFVADTLRADLTRDREEALVEIYKVMRPGEPPTKEAAENLFNNLFFSSERYDLSPVGRMKFNRRLGRPYEVGTDQKSREVEGILSHEDIIDVLRTLVEIRNGKGEVDDIDHLGNRRVRSVGEMTENQFRVGLVRVERAVKERLSQAETDNLSPQDLINAKPVAAAIKEFFGSSQLSQFMDQNNPLSEITHKRRVSALGPGGLTRERAGFEVRDVHQTHYGRVCPIETPEGPNIGLINSLSVYAKANDFGFLETPYRKVIDGRVTDDVEYLSAIEEVGTVIAQADSAVDKDGNLTEEFVSVRHQGEFVRMPPEKVTHMDVSAQQVVSVAASLIPFLEHDDANRALMGSNMQRQAVPTLRADKPLVGTGMEANVARDSGVCVIANRGGVIEYVDASRIVIRVNEDEMVAGEAGVDIYNLIKYTRSNQNTCINQNVIVNLGDKVARGDILADGPSTDMGELALGQNMRVAFMTWNGYNYEDSILLSERVLQEDRLTSIHIQELSCVARDTKLGAEEITADIPNVGEAALSKLDESGIVYIGAEVTAGDILVGKVTPKGETQLTPEEKLLRAIFGEKAADVKDSSLRVPSGTKGTVIDVQVFTRDGLEKDDRALAIEKAQLDSYRKDLKEEYKIFEEAARERVIRLLKGQESNGGGSTKRGDKLSEDLLSGLELVDLLEIQPADEAIAERLTQIQVFLKEKSAEIDEKFAEKKRKLATGDELTTGVLKVVKVYLAVKRRIQPGDKMAGRHGNKGVVSNILPVEDMPHDANGVPVDIVLNPLGVPSRMNVGQILETHLGMAAKGLGDKIEKMLKEQRTVLELREFLDKIYNKVGGEQEDLDSLTDEEILALAGNLRAGVPLATPVFDGAEESQIKDLLELADISRTGQTVLFDGRTGEQFDRPVTVGYMYMLKLNHLVDDKMHARSTGSYSLVTQQPLGGKAQFGGQRFGEMEVWALEAYGAAYTLQEMLTVKSDDVEGRTRIYKNIVDGNHYMDPGMPESFNVLTKEIRSLGINID.

This sequence belongs to the RNA polymerase beta chain family. In terms of assembly, the RNAP catalytic core consists of 2 alpha, 1 beta, 1 beta' and 1 omega subunit. When a sigma factor is associated with the core the holoenzyme is formed, which can initiate transcription.

It carries out the reaction RNA(n) + a ribonucleoside 5'-triphosphate = RNA(n+1) + diphosphate. Its function is as follows. DNA-dependent RNA polymerase catalyzes the transcription of DNA into RNA using the four ribonucleoside triphosphates as substrates. In Acinetobacter baumannii (strain ATCC 17978 / DSM 105126 / CIP 53.77 / LMG 1025 / NCDC KC755 / 5377), this protein is DNA-directed RNA polymerase subunit beta.